Here is a 562-residue protein sequence, read N- to C-terminus: Dihydroxy-acid dehydratase (562 aa).

A Mg(2+)-binding site is contributed by Asp80. Cys121 lines the [2Fe-2S] cluster pocket. Asp122 and Lys123 together coordinate Mg(2+). The residue at position 123 (Lys123) is an N6-carboxylysine. [2Fe-2S] cluster is bound at residue Cys194. Residue Glu446 coordinates Mg(2+). The active-site Proton acceptor is the Ser472.

Belongs to the IlvD/Edd family. In terms of assembly, homodimer. [2Fe-2S] cluster serves as cofactor. Requires Mg(2+) as cofactor.

It carries out the reaction (2R)-2,3-dihydroxy-3-methylbutanoate = 3-methyl-2-oxobutanoate + H2O. The catalysed reaction is (2R,3R)-2,3-dihydroxy-3-methylpentanoate = (S)-3-methyl-2-oxopentanoate + H2O. It functions in the pathway amino-acid biosynthesis; L-isoleucine biosynthesis; L-isoleucine from 2-oxobutanoate: step 3/4. Its pathway is amino-acid biosynthesis; L-valine biosynthesis; L-valine from pyruvate: step 3/4. Functions in the biosynthesis of branched-chain amino acids. Catalyzes the dehydration of (2R,3R)-2,3-dihydroxy-3-methylpentanoate (2,3-dihydroxy-3-methylvalerate) into 2-oxo-3-methylpentanoate (2-oxo-3-methylvalerate) and of (2R)-2,3-dihydroxy-3-methylbutanoate (2,3-dihydroxyisovalerate) into 2-oxo-3-methylbutanoate (2-oxoisovalerate), the penultimate precursor to L-isoleucine and L-valine, respectively. In Macrococcus caseolyticus (strain JCSC5402) (Macrococcoides caseolyticum), this protein is Dihydroxy-acid dehydratase.